The sequence spans 521 residues: GMP synthase [glutamine-hydrolyzing] (521 aa).

The 193-residue stretch at 5–197 folds into the Glutamine amidotransferase type-1 domain; sequence KILILDFGSQ…VLDICGAQPG (193 aa). The active-site Nucleophile is the C81. Residues H171 and E173 contribute to the active site. The 193-residue stretch at 198-390 folds into the GMPS ATP-PPase domain; that stretch reads WTMPNYIEEA…LGLPREMVYR (193 aa). An ATP-binding site is contributed by 225 to 231; sequence SGGVDSS.

In terms of assembly, homodimer.

The enzyme catalyses XMP + L-glutamine + ATP + H2O = GMP + L-glutamate + AMP + diphosphate + 2 H(+). It functions in the pathway purine metabolism; GMP biosynthesis; GMP from XMP (L-Gln route): step 1/1. Catalyzes the synthesis of GMP from XMP. The protein is GMP synthase [glutamine-hydrolyzing] of Neisseria gonorrhoeae (strain NCCP11945).